The primary structure comprises 748 residues: ATP-dependent rRNA helicase SPB4 (748 aa).

A Q motif motif is present at residues 15-43 (WAKLNPPLSPWILDVINSMGFKNMTPVQA). Residues 46–260 (IPRAVKNQDC…GLGLRNPVRI (215 aa)) enclose the Helicase ATP-binding domain. 59–66 (AVTGSGKT) contributes to the ATP binding site. The interval 119-156 (ESEEETGDVEAHAPPFASSSRSPSPQTPDKPLFPLPML) is disordered. The segment covering 132 to 142 (PPFASSSRSPS) has biased composition (low complexity). Residues 143-152 (PQTPDKPLFP) are compositionally biased toward pro residues. Residues 207 to 210 (DEAD) carry the DEAD box motif. Positions 295–460 (KTLQLIRLLL…KAQRSILDFL (166 aa)) constitute a Helicase C-terminal domain. Positions 614-748 (AQRADNQSSN…IGGGMFDDLE (135 aa)) are disordered. 2 stretches are compositionally biased toward basic and acidic residues: residues 626-669 (ARAE…KYEW) and 708-730 (EIGK…KESS). Positions 732-748 (GGAGGGGIGGGMFDDLE) are enriched in gly residues.

This sequence belongs to the DEAD box helicase family. DDX55/SPB4 subfamily. Component of pre-60S ribosomal complexes.

It is found in the nucleus. It localises to the nucleolus. It catalyses the reaction ATP + H2O = ADP + phosphate + H(+). In terms of biological role, ATP-binding RNA helicase involved in the biogenesis of 60S ribosomal subunits. Binds 90S pre-ribosomal particles and dissociates from pre-60S ribosomal particles after processing of 27SB pre-rRNA. Required for the normal formation of 18S rRNA through the processing of pre-rRNAs at sites A0, A1 and A2, and the normal formation of 25S and 5.8S rRNAs through the processing of pre-rRNAs at sites C1 and C2. This is ATP-dependent rRNA helicase SPB4 from Cryptococcus neoformans var. neoformans serotype D (strain B-3501A) (Filobasidiella neoformans).